The primary structure comprises 658 residues: MVNSKGKITDSDPGSSHLLLNGLADKAGKNQDTEPENSLCSQYEEKVRPCIDLIDSLRALGVEQDLALPAIAVIGDQSSGKSSVLEALSGVALPRGSGIVTRCPLVLKLKKLLNKDEWRGKVSYQDFEMEISDPSEVEVEINKAQNAIAGEGQGISHELISLEVSSPHVPDLTLIDLPGITRVAVGNQPADIGHQTKKLIKKYILKQETINLVVVPCNVDIATTEALSMAEEVDPDGDRTIGILTKPDLVDRGTESKVVDVAQNLVCHLKKGYMIVKCRGQQDIQDQVTLTEALQKERDFFEDHPHFRVLLEEGRATVPCLADRLTSELITHICKTLPLLENQIKENYEKITEELQKYGSDVPEEEHEKMFFLIEKINAFNHDITSLTEGEEFVGEDECRLFTKIRNEFHKWSLVIEKRFQRGYKAICKQIERFENRYRGRELPGFVNYKTFEIIIKQQIKELEEPAVYMLHTITDMVQAAFTDISEANFAEFFNLYRTTKSKIEDIKFELEKEAEKSIRLHFQMEQIVYCQDQVYQCALQRVREESDKGKDRKINSMCSKEVSSVNISLSDIFEHLLAYRQEATNRISSHIPLIIQYFILQVYGQKLQKDMLLLLHDKDTHNWLLKERSDTSDKRKLLKERLARLAQARRRLAKFPG.

An N-acetylmethionine modification is found at M1. The segment at M1–L20 is disordered. Residues D65–P338 form the Dynamin-type G domain. The tract at residues G75 to S82 is G1 motif. G75 to S82 contributes to the GTP binding site. The tract at residues V100–R102 is G2 motif. Residues D176 to G179 are G3 motif. Residues D176 to I180 and T245 to D248 contribute to the GTP site. The G4 motif stretch occupies residues T245 to D248. A G5 motif region spans residues K277–G280. The tract at residues L339–E364 is bundle signaling element (BSE). The interval E364–C531 is middle domain. The segment at E365–E628 is stalk. The critical for lipid-binding stretch occupies residues K551–K554. The GED domain maps to L570–G658.

Belongs to the TRAFAC class dynamin-like GTPase superfamily. Dynamin/Fzo/YdjA family. As to quaternary structure, homooligomer. Oligomerizes into multimeric filamentous or ring-like structures by virtue of its stalk domain. Oligomerization is critical for GTPase activity, protein stability, and recognition of viral target structures. Interacts with TRPC1, TRPC3, TRPC4, TRPC5, TRPC6 and TRPC7. Interacts with HSPA5. Interacts with TUBB/TUBB5. Interacts with DDX39A and DDX39B. ISGylated.

Its subcellular location is the cytoplasm. It is found in the endoplasmic reticulum membrane. The protein resides in the perinuclear region. In terms of biological role, interferon-induced dynamin-like GTPase with antiviral activity. The sequence is that of Interferon-induced GTP-binding protein Mx1 (MX1) from Eumetopias jubatus (Steller sea lion).